The primary structure comprises 89 residues: Tuberculin-active protein (89 aa).

A disulfide bridge links C27 with C59. Residues 61-89 (DGGSESEGKNGSQMRLIADVGPESATVAK) form a disordered region.

Tuberculin is the soluble, proteinaceous cell substance of the bacterium, to which infected animals become hypersensitive and react characteristically to dermal injections. The sequence is that of Tuberculin-active protein from Mycobacterium tuberculosis.